The sequence spans 73 residues: MKKTRRSSFSGVLMFCKSLFRRFSGVTDVNIVIKIIFYGIYVLLERRSVVEGRPNKRRCPFGTDTFLRCNFRY.

This is an uncharacterized protein from Invertebrate iridescent virus 6 (IIV-6).